Here is a 254-residue protein sequence, read N- to C-terminus: CDP-diacylglycerol pyrophosphatase (254 aa).

Residues 6-26 (YFLLALLVAILAALAGGYYWL) form a helical membrane-spanning segment.

It belongs to the Cdh family.

It localises to the cell inner membrane. It catalyses the reaction a CDP-1,2-diacyl-sn-glycerol + H2O = a 1,2-diacyl-sn-glycero-3-phosphate + CMP + 2 H(+). It participates in phospholipid metabolism; CDP-diacylglycerol degradation; phosphatidate from CDP-diacylglycerol: step 1/1. In Klebsiella pneumoniae (strain 342), this protein is CDP-diacylglycerol pyrophosphatase.